Here is a 90-residue protein sequence, read N- to C-terminus: Co-chaperonin GroES (90 aa).

This sequence belongs to the GroES chaperonin family. As to quaternary structure, heptamer of 7 subunits arranged in a ring. Interacts with the chaperonin GroEL.

Its subcellular location is the cytoplasm. Its function is as follows. Together with the chaperonin GroEL, plays an essential role in assisting protein folding. The GroEL-GroES system forms a nano-cage that allows encapsulation of the non-native substrate proteins and provides a physical environment optimized to promote and accelerate protein folding. GroES binds to the apical surface of the GroEL ring, thereby capping the opening of the GroEL channel. The sequence is that of Co-chaperonin GroES from Borreliella burgdorferi (strain ATCC 35210 / DSM 4680 / CIP 102532 / B31) (Borrelia burgdorferi).